Here is an 82-residue protein sequence, read N- to C-terminus: Delta-actitoxin-Aeq2b 1 (82 aa).

An N-terminal signal peptide occupies residues 1-19 (MNRLMILVFAAVILALASA). Residues 20 to 26 (DEDVDIA) constitute a propeptide that is removed on maturation. 3 cysteine pairs are disulfide-bonded: C32–C79, C34–C69, and C62–C80.

Belongs to the sea anemone sodium channel inhibitory toxin family. Type I subfamily.

It localises to the secreted. It is found in the nematocyst. Binds specifically to voltage-gated sodium channels (Nav), thereby delaying their inactivation during signal transduction. Causes death to crabs. The sequence is that of Delta-actitoxin-Aeq2b 1 from Actinia equina (Beadlet anemone).